We begin with the raw amino-acid sequence, 108 residues long: Glutaredoxin-1 (108 aa).

One can recognise a Glutaredoxin domain in the interval 3–106; it reads EEFVQQRLAN…DILSSIGVLR (104 aa). A disulfide bridge connects residues Cys23 and Cys26.

This sequence belongs to the glutaredoxin family.

The protein resides in the virion. Its function is as follows. Has thioltransferase and dehydroascorbate reductase activities. This Cowpox virus (strain GRI-90 / Grishak) (CPV) protein is Glutaredoxin-1 (OPG075).